Consider the following 123-residue polypeptide: Fluoride-specific ion channel FluC 1 (123 aa).

Helical transmembrane passes span 1-21 (MVDLLLIGLGGSIGAILRYTL), 34-54 (PLATFLINIIGSFGLGLLYGF), 59-79 (VIWLLLGTGFFGGFTTFSTYI), and 99-119 (LTSIFTGVVFFAAGMWLANFF). Na(+) contacts are provided by Gly70 and Thr73.

The protein belongs to the fluoride channel Fluc/FEX (TC 1.A.43) family.

The protein localises to the cell membrane. It catalyses the reaction fluoride(in) = fluoride(out). Na(+) is not transported, but it plays an essential structural role and its presence is essential for fluoride channel function. Functionally, fluoride-specific ion channel. Important for reducing fluoride concentration in the cell, thus reducing its toxicity. This Carboxydothermus hydrogenoformans (strain ATCC BAA-161 / DSM 6008 / Z-2901) protein is Fluoride-specific ion channel FluC 1.